A 725-amino-acid chain; its full sequence is D-(-)-3-hydroxybutyrate oligomer hydrolase (725 aa).

Positions 1–22 (MNTTRDANRLRQRASLSGLALA) are cleaved as a signal peptide. Catalysis depends on S322, which acts as the Charge relay system.

This sequence belongs to the D-(-)-3-hydroxybutyrate oligomer hydrolase family.

Its subcellular location is the secreted. It catalyses the reaction (3R)-hydroxybutanoate dimer + H2O = 2 (R)-3-hydroxybutanoate + H(+). It functions in the pathway lipid metabolism; butanoate metabolism. In terms of biological role, participates in the degradation of poly-3-hydroxybutyrate (PHB). It works downstream of poly(3-hydroxybutyrate) depolymerase, hydrolyzing D(-)-3-hydroxybutyrate oligomers of various length (3HB-oligomers) into 3HB-monomers. The protein is D-(-)-3-hydroxybutyrate oligomer hydrolase of Ralstonia nicotianae (strain ATCC BAA-1114 / GMI1000) (Ralstonia solanacearum).